A 179-amino-acid chain; its full sequence is Interleukin-10 (179 aa).

Positions 1–19 are cleaved as a signal peptide; that stretch reads MPSSSALLCCLVFLAGVAA. Cystine bridges form between C31-C127 and C81-C133. N135 is a glycosylation site (N-linked (GlcNAc...) asparagine).

Belongs to the IL-10 family. As to quaternary structure, homodimer. Interacts with IL10RA and IL10RB.

Its subcellular location is the secreted. Its function is as follows. Major immune regulatory cytokine that acts on many cells of the immune system where it has profound anti-inflammatory functions, limiting excessive tissue disruption caused by inflammation. Mechanistically, IL10 binds to its heterotetrameric receptor comprising IL10RA and IL10RB leading to JAK1 and STAT2-mediated phosphorylation of STAT3. In turn, STAT3 translocates to the nucleus where it drives expression of anti-inflammatory mediators. Targets antigen-presenting cells (APCs) such as macrophages and monocytes and inhibits their release of pro-inflammatory cytokines including granulocyte-macrophage colony-stimulating factor /GM-CSF, granulocyte colony-stimulating factor/G-CSF, IL-1 alpha, IL-1 beta, IL-6, IL-8 and TNF-alpha. Also interferes with antigen presentation by reducing the expression of MHC-class II and co-stimulatory molecules, thereby inhibiting their ability to induce T cell activation. In addition, controls the inflammatory response of macrophages by reprogramming essential metabolic pathways including mTOR signaling. The polypeptide is Interleukin-10 (IL10) (Bubalus carabanensis (Swamp type water buffalo)).